The following is a 489-amino-acid chain: MALSSIEHYLSYHLRVLLPQVLSSKSSHNIAYIFALFAAITSGFVSLISLYAQPWQEHLSYSSWQINMIVTVINMGMYLTPPILGIIADIHGPITLSLSSVLGFIPSYAYLAYTFHRDHSFTNESDGSFTPTLVCFFIIGVATSGLYFSALITCAKLFPGTKLLSISIPTTCYGLSSLIGSQFLRVKYFHPVDYPYLDLGRVFKAFAWIYTVIGVMIWIATSKVAQIQHEADIMEEQDRMAEPSDNDVENHYDDNEQSRLLHATHAQQMTLMKVFRDPVLYIFGATIFCALGPLEMFIANMGSLTNVLAGGHEPAMSSALLSIYALTSTLTRLGTGLTVDYFNKRQLSVKWILLLFLVVGLVTQGKIYMLSMSSLDHSHMVTINRKLFYIGIMQGIAYGGLFTIYPTITLMVWGEKMFGTAYGTLMIAPALGSALSCLIYADVYDSECANSTTRSCIAPVYETTALEFCAAILLTVVVTVLWRKRRTHI.

Transmembrane regions (helical) follow at residues 30-50 (IAYI…LISL), 68-88 (MIVT…GIIA), and 92-112 (GPIT…AYLA). N123 is a glycosylation site (N-linked (GlcNAc...) asparagine). The next 8 helical transmembrane spans lie at 132–152 (TLVC…SALI), 163–183 (LLSI…GSQF), 202–222 (VFKA…IATS), 279–299 (VLYI…MFIA), 307–327 (VLAG…YALT), 351–371 (WILL…YMLS), 388–408 (FYIG…YPTI), and 421–441 (AYGT…LIYA). N-linked (GlcNAc...) asparagine glycosylation occurs at N450. A helical transmembrane segment spans residues 462 to 482 (ETTALEFCAAILLTVVVTVLW).

The protein belongs to the major facilitator superfamily.

The protein localises to the vacuole membrane. Probable transporter. This chain is Probable transporter MCH1 (MCH1), found in Candida glabrata (strain ATCC 2001 / BCRC 20586 / JCM 3761 / NBRC 0622 / NRRL Y-65 / CBS 138) (Yeast).